The chain runs to 271 residues: Putative phosphoenolpyruvate synthase regulatory protein (271 aa).

Position 151-158 (151-158 (GVSRSGKT)) interacts with ADP.

This sequence belongs to the pyruvate, phosphate/water dikinase regulatory protein family. PSRP subfamily.

The enzyme catalyses [pyruvate, water dikinase] + ADP = [pyruvate, water dikinase]-phosphate + AMP + H(+). It catalyses the reaction [pyruvate, water dikinase]-phosphate + phosphate + H(+) = [pyruvate, water dikinase] + diphosphate. In terms of biological role, bifunctional serine/threonine kinase and phosphorylase involved in the regulation of the phosphoenolpyruvate synthase (PEPS) by catalyzing its phosphorylation/dephosphorylation. This is Putative phosphoenolpyruvate synthase regulatory protein from Burkholderia thailandensis (strain ATCC 700388 / DSM 13276 / CCUG 48851 / CIP 106301 / E264).